A 1011-amino-acid chain; its full sequence is Protein translocase subunit SecA (1011 aa).

Residues glutamine 87, 105–109, and aspartate 500 each bind ATP; that span reads GEGKT. Residues 969 to 1011 are disordered; it reads SLPLGANPAPARPQPAVMQEQECPCGSGKPFNKCHGGEDEATA. Residues cysteine 991, cysteine 993, cysteine 1002, and histidine 1003 each contribute to the Zn(2+) site.

The protein belongs to the SecA family. As to quaternary structure, monomer and homodimer. Part of the essential Sec protein translocation apparatus which comprises SecA, SecYEG and auxiliary proteins SecDF-YajC and YidC. Zn(2+) is required as a cofactor.

Its subcellular location is the cell inner membrane. It is found in the cytoplasm. It carries out the reaction ATP + H2O + cellular proteinSide 1 = ADP + phosphate + cellular proteinSide 2.. Its function is as follows. Part of the Sec protein translocase complex. Interacts with the SecYEG preprotein conducting channel. Has a central role in coupling the hydrolysis of ATP to the transfer of proteins into and across the cell membrane, serving as an ATP-driven molecular motor driving the stepwise translocation of polypeptide chains across the membrane. This Sorangium cellulosum (strain So ce56) (Polyangium cellulosum (strain So ce56)) protein is Protein translocase subunit SecA.